Here is a 388-residue protein sequence, read N- to C-terminus: MQNVHKRVIKDINDGMKNLKQEFGIYLAPEEDDFYKVHFILQGPEGTPFEGGLYHGMIRLNNDHPFRPPNLHMITPSGRFEAEKYPISPNSRGICTTATSFHPESWTSMNNLETVLKGFVSLMCDPYDGGVGAVKSTDTQVKKLAQDSLTHIGNDLMVQKLFPDLYKAVNNGTFKPVKLAELSKIVYKEPTKPIVEEKSAKTSKSSTKTSVKSKKNQKSDSEEEENSDDDNTDSDSESDDFRDLDDVVDDSDQESDDESDSSSESENESGGSDDESDDGSDDESDDETSESDSESEEEKPVKKSTRKISKTTTKSSSTKPVKSIKSSKSTTTKPTKPTKSTKTTKSTKSTKSTKSTKPTESTKSSRSVKTTESSKSSKSSKSSKTGKK.

One can recognise a UBC core domain in the interval 3–162 (NVHKRVIKDI…GNDLMVQKLF (160 aa)). The active-site Glycyl thioester intermediate is Cys-95. Positions 195-388 (VEEKSAKTSK…SSKSSKTGKK (194 aa)) are disordered. Acidic residues-rich tracts occupy residues 221–238 (SEEE…DSES) and 246–297 (DVVD…ESEE). The segment covering 310-388 (KTTTKSSSTK…SSKSSKTGKK (79 aa)) has biased composition (low complexity).

It belongs to the ubiquitin-conjugating enzyme family.

It carries out the reaction S-ubiquitinyl-[E1 ubiquitin-activating enzyme]-L-cysteine + [E2 ubiquitin-conjugating enzyme]-L-cysteine = [E1 ubiquitin-activating enzyme]-L-cysteine + S-ubiquitinyl-[E2 ubiquitin-conjugating enzyme]-L-cysteine.. Its pathway is protein modification; protein ubiquitination. Functionally, catalyzes the covalent attachment of ubiquitin to other proteins. The chain is Probable ubiquitin-conjugating enzyme E2 L709 from Acanthamoeba polyphaga (Amoeba).